We begin with the raw amino-acid sequence, 139 residues long: D-ribose pyranase (139 aa).

H20 acts as the Proton donor in catalysis. Residues D28, H106, and 128-130 (YAN) each bind substrate.

It belongs to the RbsD / FucU family. RbsD subfamily. In terms of assembly, homodecamer.

The protein localises to the cytoplasm. It catalyses the reaction beta-D-ribopyranose = beta-D-ribofuranose. The protein operates within carbohydrate metabolism; D-ribose degradation; D-ribose 5-phosphate from beta-D-ribopyranose: step 1/2. Functionally, catalyzes the interconversion of beta-pyran and beta-furan forms of D-ribose. In Maridesulfovibrio salexigens (strain ATCC 14822 / DSM 2638 / NCIMB 8403 / VKM B-1763) (Desulfovibrio salexigens), this protein is D-ribose pyranase.